Here is a 233-residue protein sequence, read N- to C-terminus: Ribosome maturation protein SDO1 homolog (233 aa).

Belongs to the SDO1/SBDS family.

The polypeptide is Ribosome maturation protein SDO1 homolog (Aeropyrum pernix (strain ATCC 700893 / DSM 11879 / JCM 9820 / NBRC 100138 / K1)).